The sequence spans 305 residues: Aspartate carbamoyltransferase catalytic subunit (305 aa).

Residues Arg60 and Thr61 each coordinate carbamoyl phosphate. Residue Lys88 participates in L-aspartate binding. Residues Arg110, His138, and Gln141 each contribute to the carbamoyl phosphate site. L-aspartate contacts are provided by Arg171 and Arg222. Carbamoyl phosphate-binding residues include Ala263 and Pro264.

It belongs to the aspartate/ornithine carbamoyltransferase superfamily. ATCase family. Heterododecamer (2C3:3R2) of six catalytic PyrB chains organized as two trimers (C3), and six regulatory PyrI chains organized as three dimers (R2).

The enzyme catalyses carbamoyl phosphate + L-aspartate = N-carbamoyl-L-aspartate + phosphate + H(+). The protein operates within pyrimidine metabolism; UMP biosynthesis via de novo pathway; (S)-dihydroorotate from bicarbonate: step 2/3. In terms of biological role, catalyzes the condensation of carbamoyl phosphate and aspartate to form carbamoyl aspartate and inorganic phosphate, the committed step in the de novo pyrimidine nucleotide biosynthesis pathway. This Halalkalibacterium halodurans (strain ATCC BAA-125 / DSM 18197 / FERM 7344 / JCM 9153 / C-125) (Bacillus halodurans) protein is Aspartate carbamoyltransferase catalytic subunit.